The following is a 530-amino-acid chain: MKNNFDDISAIIKDRIKNFDQKIDRSEVGKVISIGDGIALVSGLDKVENSEVVIFDNDVYGLALNLEEEAVGVALFGNSNLISEGDSVRRSGQVISVPVGEAMLSRVVDSLGKPIDGKGPIKSSKMAKIFKLAPGVMTRKEVNQPLETGIIAIDSMIPVGKGQRELIIGDRQTGKTAIAIDTIINQKGKNVYCVYVAIGQKNSTVAQIVQKLNDTGSMDYTTVVVAGASESAPQQYIAPYTGVTIAEEFMSQGKDVLVIYDDLSKHAIAYRTLSLLLRRPPGREAYPGDVFYLHSQLLERAARLNKKYGGGSITAFPIIETQQGDISAYIPTNVISITDGQIFTKESLFNSGQRPAVDVGFSVSRVGSAAQTKAMKSVVGSLKLELAQYNEMLAFAQFGSDLDENTKAILEHGAKVYELIKQDQYSPISQADQAVILIGVKERIINIVPKEWISEYRNQVIKYLQKDPDGKVIESNIINEGIISKENYAKLEQALVKICKSIVSSIPNYDASMHKSLPEKYLETKEVDNV.

169–176 (GDRQTGKT) lines the ATP pocket.

Belongs to the ATPase alpha/beta chains family. F-type ATPases have 2 components, CF(1) - the catalytic core - and CF(0) - the membrane proton channel. CF(1) has five subunits: alpha(3), beta(3), gamma(1), delta(1), epsilon(1). CF(0) has three main subunits: a(1), b(2) and c(9-12). The alpha and beta chains form an alternating ring which encloses part of the gamma chain. CF(1) is attached to CF(0) by a central stalk formed by the gamma and epsilon chains, while a peripheral stalk is formed by the delta and b chains.

It is found in the cell membrane. It carries out the reaction ATP + H2O + 4 H(+)(in) = ADP + phosphate + 5 H(+)(out). Produces ATP from ADP in the presence of a proton gradient across the membrane. The alpha chain is a regulatory subunit. In Mycoplasmopsis synoviae (strain 53) (Mycoplasma synoviae), this protein is ATP synthase subunit alpha.